Here is a 521-residue protein sequence, read N- to C-terminus: Glucose-1-phosphate adenylyltransferase small subunit, chloroplastic (521 aa).

The interval 1-24 (MAASIGALKSSPSSHNCINERRND) is disordered. The N-terminal 72 residues, 1–72 (MAASIGALKS…RSPLIVSPKA (72 aa)), are a transit peptide targeting the chloroplast.

This sequence belongs to the bacterial/plant glucose-1-phosphate adenylyltransferase family. Heterotetramer.

Its subcellular location is the plastid. It localises to the chloroplast. The catalysed reaction is alpha-D-glucose 1-phosphate + ATP + H(+) = ADP-alpha-D-glucose + diphosphate. It participates in glycan biosynthesis; starch biosynthesis. Its activity is regulated as follows. Activated by 3'phosphoglycerate, inhibited by orthophosphate. Allosteric regulation. Its function is as follows. This protein plays a role in synthesis of starch. It catalyzes the synthesis of the activated glycosyl donor, ADP-glucose from Glc-1-P and ATP. In Solanum lycopersicum (Tomato), this protein is Glucose-1-phosphate adenylyltransferase small subunit, chloroplastic.